A 142-amino-acid chain; its full sequence is HTH-type transcriptional regulator MntR (142 aa).

Positions 1–63 (MPTPSMEDYI…YEKYRGLVLT (63 aa)) constitute an HTH dtxR-type domain. Mn(2+) is bound by residues Asp-8, Glu-11, His-77, Glu-99, Glu-102, and His-103.

This sequence belongs to the DtxR/MntR family. As to quaternary structure, homodimer.

It localises to the cytoplasm. DNA binding is strongly activated by Mn(2+). Its function is as follows. Central regulator of manganese homeostasis. This chain is HTH-type transcriptional regulator MntR, found in Bacillus cereus (strain G9842).